A 427-amino-acid polypeptide reads, in one-letter code: V-type proton ATPase subunit C 2 (427 aa).

Positions 292–319 (HKVKVTPLGNPDRPAAGQTDRERESEGE) are disordered.

It belongs to the V-ATPase C subunit family. As to quaternary structure, V-ATPase is a heteromultimeric enzyme made up of two complexes: the ATP-hydrolytic V1 complex and the proton translocation V0 complex. The V1 complex consists of three catalytic AB heterodimers that form a heterohexamer, three peripheral stalks each consisting of EG heterodimers, one central rotor including subunits D and F, and the regulatory subunits C and H. The proton translocation complex V0 consists of the proton transport subunit a, a ring of proteolipid subunits c9c'', rotary subunit d, subunits e and f, and the accessory subunits ATP6AP1/Ac45 and ATP6AP2/PRR. As to expression, kidney and placenta.

In terms of biological role, subunit of the V1 complex of vacuolar(H+)-ATPase (V-ATPase), a multisubunit enzyme composed of a peripheral complex (V1) that hydrolyzes ATP and a membrane integral complex (V0) that translocates protons. V-ATPase is responsible for acidifying and maintaining the pH of intracellular compartments and in some cell types, is targeted to the plasma membrane, where it is responsible for acidifying the extracellular environment. Subunit C is necessary for the assembly of the catalytic sector of the enzyme and is likely to have a specific function in its catalytic activity. This is V-type proton ATPase subunit C 2 (ATP6V1C2) from Homo sapiens (Human).